The chain runs to 122 residues: MIQQQTYLNVADNSGARKLMCLRVLGTGNCTYGGIGDQIIAVVKDALPNMPIKKSDVVRAVIVRTKQPLRRASGMSIRFDDNAAVIINAEGNPRGTRVFGPVARELRDKNFTKIVSLAPEVL.

It belongs to the universal ribosomal protein uL14 family. As to quaternary structure, part of the 50S ribosomal subunit. Forms a cluster with proteins L3 and L19. In the 70S ribosome, L14 and L19 interact and together make contacts with the 16S rRNA in bridges B5 and B8. Can interact with ribosomal silencing factor RsfS, which may inhibit ribosomal subunit association.

Binds to 23S rRNA. Forms part of two intersubunit bridges in the 70S ribosome. This chain is Large ribosomal subunit protein uL14, found in Synechocystis sp. (strain ATCC 27184 / PCC 6803 / Kazusa).